Consider the following 95-residue polypeptide: Hge-scorpine (95 aa).

The first 19 residues, 1 to 19 (MNTKLTVLCFLGIVTIVSC), serve as a signal peptide directing secretion. A BetaSPN-type CS-alpha/beta domain is found at 55 to 94 (QFGCFANVDVKGDCKRHCKAEDKEGICHGTKCKCGVPISY). Cystine bridges form between C58/C81, C68/C86, and C72/C88.

It belongs to the long chain scorpion toxin family. Class 3 subfamily. Expressed by the venom gland.

The protein localises to the secreted. Has antibacterial activity against B.subtilis, but not against S.aureus. Also has hemolytic and cytolytic activities. Since cell lysis occurs at the tested concentrations, observation of activity on potassium channels is impossible. In terms of biological role, blocks Kv1.1/KCNA1 (IC(50)=185 nM) potassium channels. Shows a weak hemolytic activity. This is Hge-scorpine from Hoffmannihadrurus gertschi (Scorpion).